We begin with the raw amino-acid sequence, 475 residues long: Membrane-bound lytic murein transglycosylase F (475 aa).

An N-terminal signal peptide occupies residues 1–30; sequence MKKLKINYLFIGILTLLLAAALWPSIPWFG. The tract at residues 31–269 is non-LT domain; it reads KTENHIAAIQ…RIEEKYLGHG (239 aa). The LT domain stretch occupies residues 270 to 475; it reads DDFDYVDTRS…MKLAQDYPAV (206 aa). Glu-314 is an active-site residue.

The protein in the N-terminal section; belongs to the bacterial solute-binding protein 3 family. In the C-terminal section; belongs to the transglycosylase Slt family.

Its subcellular location is the cell outer membrane. It carries out the reaction Exolytic cleavage of the (1-&gt;4)-beta-glycosidic linkage between N-acetylmuramic acid (MurNAc) and N-acetylglucosamine (GlcNAc) residues in peptidoglycan, from either the reducing or the non-reducing ends of the peptidoglycan chains, with concomitant formation of a 1,6-anhydrobond in the MurNAc residue.. In terms of biological role, murein-degrading enzyme that degrades murein glycan strands and insoluble, high-molecular weight murein sacculi, with the concomitant formation of a 1,6-anhydromuramoyl product. Lytic transglycosylases (LTs) play an integral role in the metabolism of the peptidoglycan (PG) sacculus. Their lytic action creates space within the PG sacculus to allow for its expansion as well as for the insertion of various structures such as secretion systems and flagella. The polypeptide is Membrane-bound lytic murein transglycosylase F (Salmonella typhi).